Consider the following 62-residue polypeptide: MNWGSISSGTPGLFVESIRNTPSVVKINVIFLKVISNTAVSVFWRDRRIRFESDWLNSYFQK.

This sequence belongs to the asfivirus C62L family.

This is an uncharacterized protein from African swine fever virus (strain Badajoz 1971 Vero-adapted) (Ba71V).